A 447-amino-acid chain; its full sequence is ATP-dependent protease ATPase subunit HslU (447 aa).

Residues Ile-18, 60–65, Asp-259, Glu-325, and Arg-397 each bind ATP; that span reads GVGKTE.

It belongs to the ClpX chaperone family. HslU subfamily. A double ring-shaped homohexamer of HslV is capped on each side by a ring-shaped HslU homohexamer. The assembly of the HslU/HslV complex is dependent on binding of ATP.

It is found in the cytoplasm. ATPase subunit of a proteasome-like degradation complex; this subunit has chaperone activity. The binding of ATP and its subsequent hydrolysis by HslU are essential for unfolding of protein substrates subsequently hydrolyzed by HslV. HslU recognizes the N-terminal part of its protein substrates and unfolds these before they are guided to HslV for hydrolysis. The protein is ATP-dependent protease ATPase subunit HslU of Burkholderia pseudomallei (strain 668).